The following is a 430-amino-acid chain: Serine--tRNA ligase (430 aa).

237–239 (TAE) contributes to the L-serine binding site. 268-270 (RSE) is a binding site for ATP. An L-serine-binding site is contributed by Glu291. 355 to 358 (EISS) provides a ligand contact to ATP. Residue Ser391 coordinates L-serine.

Belongs to the class-II aminoacyl-tRNA synthetase family. Type-1 seryl-tRNA synthetase subfamily. As to quaternary structure, homodimer. The tRNA molecule binds across the dimer.

It is found in the cytoplasm. It carries out the reaction tRNA(Ser) + L-serine + ATP = L-seryl-tRNA(Ser) + AMP + diphosphate + H(+). The catalysed reaction is tRNA(Sec) + L-serine + ATP = L-seryl-tRNA(Sec) + AMP + diphosphate + H(+). It participates in aminoacyl-tRNA biosynthesis; selenocysteinyl-tRNA(Sec) biosynthesis; L-seryl-tRNA(Sec) from L-serine and tRNA(Sec): step 1/1. Functionally, catalyzes the attachment of serine to tRNA(Ser). Is also able to aminoacylate tRNA(Sec) with serine, to form the misacylated tRNA L-seryl-tRNA(Sec), which will be further converted into selenocysteinyl-tRNA(Sec). The chain is Serine--tRNA ligase from Yersinia pseudotuberculosis serotype O:1b (strain IP 31758).